Here is a 217-residue protein sequence, read N- to C-terminus: Large ribosomal subunit protein uL1 (217 aa).

The protein belongs to the universal ribosomal protein uL1 family. As to quaternary structure, component of the large ribosomal subunit (LSU). Mature N.crassa ribosomes consist of a small (40S) and a large (60S) subunit. The 40S small subunit contains 1 molecule of ribosomal RNA (18S rRNA) and at least 32 different proteins. The large 60S subunit contains 3 rRNA molecules (26S, 5.8S and 5S rRNA) and at least 42 different proteins. uL1 forms part of the L1 stalk.

The protein localises to the cytoplasm. In terms of biological role, component of the ribosome, a large ribonucleoprotein complex responsible for the synthesis of proteins in the cell. The small ribosomal subunit (SSU) binds messenger RNAs (mRNAs) and translates the encoded message by selecting cognate aminoacyl-transfer RNA (tRNA) molecules. The large subunit (LSU) contains the ribosomal catalytic site termed the peptidyl transferase center (PTC), which catalyzes the formation of peptide bonds, thereby polymerizing the amino acids delivered by tRNAs into a polypeptide chain. The nascent polypeptides leave the ribosome through a tunnel in the LSU and interact with protein factors that function in enzymatic processing, targeting, and the membrane insertion of nascent chains at the exit of the ribosomal tunnel. uL1 forms part of the L1 stalk, a mobile element that plays a role in evacuating the exit-site tRNA. This chain is Large ribosomal subunit protein uL1 (crp-74), found in Neurospora crassa (strain ATCC 24698 / 74-OR23-1A / CBS 708.71 / DSM 1257 / FGSC 987).